The primary structure comprises 480 residues: UDP-glycosyltransferase 71C5 (480 aa).

UDP-alpha-D-glucose contacts are provided by residues Ser-290, 349-351 (APQ), 366-374 (HCGWNSVQE), and 388-391 (YAEQ).

This sequence belongs to the UDP-glycosyltransferase family.

Functionally, possesses low quercetin 3-O-glucosyltransferase activity in vitro. The polypeptide is UDP-glycosyltransferase 71C5 (UGT71C5) (Arabidopsis thaliana (Mouse-ear cress)).